A 445-amino-acid chain; its full sequence is MSERKFFGTDGIRGKVGSGQMTPELALKLGWAAGRVLSRSGTNKVIIGKDTRISGYMFESALEAGLSAAGLNVMLMGPMPTPAVAYLTRTFRAEAGVVISASHNPYYDNGIKFFSNDGSKLDDNLELEIEAELEKPLECVESHLLGKVSRIEDARGRYIEYCKGNFPADQTLTGLKIVVDCAHGATYHIAPAVFRELGAEVIAIGDKPNGVNINDKVGATSMAKICETVLTEGADLGIALDGDGDRIMMVNSRGEVIDGDQILYILACDAKARGVLRGGVVGTLMSNLGLDLALQALDIPFARSKVGDRYVMELLKELDWRIGGENSGHILNLDHGTTGDGIVAGILVLAAMRRQNATLEQLTAPMEMLPQVLVNVRFEGEHDPLSSDKVKAAQAQVESQLGARGRVLLRKSGTEPLIRVMVEGDDHNTVLAHANLIADAVKSAS.

The active-site Phosphoserine intermediate is serine 102. Positions 102, 241, 243, and 245 each coordinate Mg(2+). The residue at position 102 (serine 102) is a Phosphoserine.

The protein belongs to the phosphohexose mutase family. It depends on Mg(2+) as a cofactor. Activated by phosphorylation.

It carries out the reaction alpha-D-glucosamine 1-phosphate = D-glucosamine 6-phosphate. Catalyzes the conversion of glucosamine-6-phosphate to glucosamine-1-phosphate. This chain is Phosphoglucosamine mutase 1, found in Shewanella sp. (strain MR-7).